The sequence spans 175 residues: B9 domain-containing protein 2 (175 aa).

Positions 2-118 constitute a C2 B9-type domain; the sequence is AEVHVIGQIM…DCPTWRPLGS (117 aa).

Belongs to the B9D family. Part of the tectonic-like complex (also named B9 complex). Interacts with TUBG1.

Its subcellular location is the cytoplasm. The protein resides in the cytoskeleton. It is found in the cilium basal body. It localises to the cilium axoneme. The protein localises to the nucleus. In terms of biological role, component of the tectonic-like complex, a complex localized at the transition zone of primary cilia and acting as a barrier that prevents diffusion of transmembrane proteins between the cilia and plasma membranes. This Bos taurus (Bovine) protein is B9 domain-containing protein 2 (B9D2).